We begin with the raw amino-acid sequence, 451 residues long: LisH domain-containing protein C1711.05 (451 aa).

Residues 6–38 (MKSKVCPLIYHFLQENGYVKTAQTFLKETGDKD) enclose the LisH domain. The interval 59–394 (PYLTTEDVGK…VGDPSQWDFA (336 aa)) is disordered. Basic and acidic residues predominate over residues 73–98 (KESLEKSNDDSQKISKKGAPPEKAHS). The segment covering 99–120 (SSEASGSGSSSDESDSSSSESE) has biased composition (low complexity). Acidic residues predominate over residues 135–145 (SESESSSEDSD). Positions 146-174 (SSSSSSDSESESSSEGSDSSSSSSSSESE) are enriched in low complexity. A compositionally biased stretch (acidic residues) spans 189 to 199 (SESESSSEDSD). Low complexity predominate over residues 200–228 (SSSSSSDSESESSSEGSDSSSSSSSSESE). Composition is skewed to acidic residues over residues 243-253 (SESESSSEDSD) and 278-300 (DSED…EDSD). Residues 301–319 (STSSSSDSDSSSSSEDGNS) are compositionally biased toward low complexity. The segment covering 320–332 (NTDTTTSGEVSAQ) has biased composition (polar residues). A compositionally biased stretch (low complexity) spans 333 to 343 (SSTNSTSSEES). The span at 344 to 365 (TSVKDEDSSKIHDKSLKRKHED) shows a compositional bias: basic and acidic residues. Residues 369 to 380 (STSTKSSRTTKT) show a composition bias toward low complexity.

The protein resides in the nucleus. It is found in the nucleolus. The sequence is that of LisH domain-containing protein C1711.05 from Schizosaccharomyces pombe (strain 972 / ATCC 24843) (Fission yeast).